We begin with the raw amino-acid sequence, 158 residues long: 6,7-dimethyl-8-ribityllumazine synthase (158 aa).

5-amino-6-(D-ribitylamino)uracil contacts are provided by residues Phe-23, 61 to 63, and 85 to 87; these read SFE and AVI. 90–91 is a binding site for (2S)-2-hydroxy-3-oxobutyl phosphate; it reads DT. His-93 (proton donor) is an active-site residue. Residue Phe-118 participates in 5-amino-6-(D-ribitylamino)uracil binding. Arg-132 is a (2S)-2-hydroxy-3-oxobutyl phosphate binding site.

The protein belongs to the DMRL synthase family.

It catalyses the reaction (2S)-2-hydroxy-3-oxobutyl phosphate + 5-amino-6-(D-ribitylamino)uracil = 6,7-dimethyl-8-(1-D-ribityl)lumazine + phosphate + 2 H2O + H(+). It functions in the pathway cofactor biosynthesis; riboflavin biosynthesis; riboflavin from 2-hydroxy-3-oxobutyl phosphate and 5-amino-6-(D-ribitylamino)uracil: step 1/2. Functionally, catalyzes the formation of 6,7-dimethyl-8-ribityllumazine by condensation of 5-amino-6-(D-ribitylamino)uracil with 3,4-dihydroxy-2-butanone 4-phosphate. This is the penultimate step in the biosynthesis of riboflavin. The polypeptide is 6,7-dimethyl-8-ribityllumazine synthase (Prochlorococcus marinus (strain NATL1A)).